The sequence spans 83 residues: MKTLLLTLVVVTIVCLDFGHTLICYNDHGYIGKTTETCENGMTTCYEERWREARGTRIERGCGCYKVKPGVQMNCCKTDRCNG.

The first 21 residues, 1–21 (MKTLLLTLVVVTIVCLDFGHT), serve as a signal peptide directing secretion. Intrachain disulfides connect C24–C45, C38–C62, C64–C75, and C76–C81.

The protein belongs to the three-finger toxin family. Short-chain subfamily. Type I alpha-neurotoxin sub-subfamily. Expressed by the venom gland.

Its subcellular location is the secreted. Its function is as follows. Binds to muscle nicotinic acetylcholine receptor (nAChR) and inhibit acetylcholine from binding to the receptor, thereby impairing neuromuscular transmission. The chain is Three-finger toxin MALT0052C from Micrurus altirostris (Uruguayan coral snake).